A 187-amino-acid polypeptide reads, in one-letter code: Small monomeric GTPase RhbA (187 aa).

Positions 17, 18, 19, 20, 21, 22, 33, and 34 each coordinate GDP. Ser-17 contacts GTP. Gly-19, Lys-20, Ser-21, Ser-22, and Val-33 together coordinate GTP. Ser-21 is a Mg(2+) binding site. GTP-binding residues include Tyr-36, Thr-39, Asn-120, Asp-123, and Ala-152. An Effector region motif is present at residues 36-44 (YYPTIENTF). Position 39 (Thr-39) interacts with Mg(2+). Residues Asn-120, Asp-123, and Ala-152 each contribute to the GDP site. Cys-184 is lipidated: S-farnesyl cysteine.

Belongs to the small GTPase superfamily. Rheb family. In terms of processing, farnesylation is important for efficiently activating mTORC1-mediated signaling.

It is found in the cell membrane. The enzyme catalyses GTP + H2O = GDP + phosphate + H(+). Alternates between an inactive form bound to GDP and an active form bound to GTP. Functionally, small GTPase that acts as an allosteric activator of the canonical TOR pathway, an evolutionarily conserved central nutrient sensor that stimulates anabolic reactions and macromolecule biosynthesis to promote cellular biomass generation and growth. Plays a role in virulence. This chain is Small monomeric GTPase RhbA, found in Aspergillus fumigatus (strain ATCC MYA-4609 / CBS 101355 / FGSC A1100 / Af293) (Neosartorya fumigata).